The primary structure comprises 216 residues: Probable transaldolase (216 aa).

Lys84 serves as the catalytic Schiff-base intermediate with substrate.

The protein belongs to the transaldolase family. Type 3B subfamily.

It is found in the cytoplasm. The catalysed reaction is D-sedoheptulose 7-phosphate + D-glyceraldehyde 3-phosphate = D-erythrose 4-phosphate + beta-D-fructose 6-phosphate. It functions in the pathway carbohydrate degradation; pentose phosphate pathway; D-glyceraldehyde 3-phosphate and beta-D-fructose 6-phosphate from D-ribose 5-phosphate and D-xylulose 5-phosphate (non-oxidative stage): step 2/3. Functionally, transaldolase is important for the balance of metabolites in the pentose-phosphate pathway. The protein is Probable transaldolase of Exiguobacterium sp. (strain ATCC BAA-1283 / AT1b).